The following is a 276-amino-acid chain: Ribosomal RNA small subunit methyltransferase A (276 aa).

S-adenosyl-L-methionine is bound by residues N15, L17, G42, E63, D88, and N111.

Belongs to the class I-like SAM-binding methyltransferase superfamily. rRNA adenine N(6)-methyltransferase family. RsmA subfamily.

The protein localises to the cytoplasm. It catalyses the reaction adenosine(1518)/adenosine(1519) in 16S rRNA + 4 S-adenosyl-L-methionine = N(6)-dimethyladenosine(1518)/N(6)-dimethyladenosine(1519) in 16S rRNA + 4 S-adenosyl-L-homocysteine + 4 H(+). In terms of biological role, specifically dimethylates two adjacent adenosines (A1518 and A1519) in the loop of a conserved hairpin near the 3'-end of 16S rRNA in the 30S particle. May play a critical role in biogenesis of 30S subunits. This is Ribosomal RNA small subunit methyltransferase A from Geobacter sulfurreducens (strain ATCC 51573 / DSM 12127 / PCA).